The sequence spans 36 residues: Glucagon-1 (36 aa).

This sequence belongs to the glucagon family.

It is found in the secreted. In terms of biological role, promotes hydrolysis of glycogen and lipids, and raises the blood sugar level. This is Glucagon-1 (gcg1) from Oreochromis niloticus (Nile tilapia).